We begin with the raw amino-acid sequence, 23 residues long: Large ribosomal subunit protein uL10 (23 aa).

The protein belongs to the universal ribosomal protein uL10 family. As to quaternary structure, part of the ribosomal stalk of the 50S ribosomal subunit. The N-terminus interacts with L11 and the large rRNA to form the base of the stalk. The C-terminus forms an elongated spine to which L12 dimers bind in a sequential fashion forming a multimeric L10(L12)X complex.

Forms part of the ribosomal stalk, playing a central role in the interaction of the ribosome with GTP-bound translation factors. This is Large ribosomal subunit protein uL10 (rplJ) from Klebsiella pneumoniae.